Here is a 795-residue protein sequence, read N- to C-terminus: Inactive N-acetylated-alpha-linked acidic dipeptidase-like protein 2 (795 aa).

The interval 1–38 is disordered; it reads MGENEASLPNTSLQGKKMAYQKVHADQRAPGHSQYLDN. Residues 1–121 lie on the Cytoplasmic side of the membrane; sequence MGENEASLPN…RSAPKSNRCN (121 aa). Position 92 is a phosphoserine (serine 92). A helical; Signal-anchor for type II membrane protein membrane pass occupies residues 122–142; sequence FCHVLKILCTATILFIFGILI. Over 143–795 the chain is Extracellular; sequence GYYVHTNCPS…VFKSVLDGKN (653 aa). 4 N-linked (GlcNAc...) asparagine glycosylation sites follow: asparagine 295, asparagine 373, asparagine 534, and asparagine 759.

Belongs to the peptidase M28 family. M28B subfamily. Expressed at higher level in kidney and placenta. In embryo, it is mainly confined to duodenal and stomach endoderm, mesonephros, metanephros and pancreas.

It localises to the membrane. In terms of biological role, may be catalytically inactive. The chain is Inactive N-acetylated-alpha-linked acidic dipeptidase-like protein 2 (NAALADL2) from Homo sapiens (Human).